Consider the following 215-residue polypeptide: Ribulose-phosphate 3-epimerase (215 aa).

Residue Ser-13 coordinates substrate. A divalent metal cation-binding residues include His-38, Asp-40, His-69, and Asp-175. The Proton acceptor role is filled by Asp-40. Substrate-binding positions include His-69, 175–177 (DGG), and 196–197 (GS). Catalysis depends on Asp-175, which acts as the Proton donor.

It belongs to the ribulose-phosphate 3-epimerase family. The cofactor is a divalent metal cation.

It carries out the reaction D-ribulose 5-phosphate = D-xylulose 5-phosphate. It participates in carbohydrate degradation. Functionally, catalyzes the reversible epimerization of D-ribulose 5-phosphate to D-xylulose 5-phosphate. The chain is Ribulose-phosphate 3-epimerase from Mycoplasma pneumoniae (strain ATCC 29342 / M129 / Subtype 1) (Mycoplasmoides pneumoniae).